The primary structure comprises 1369 residues: Xanthine dehydrogenase (1369 aa).

The region spanning 20 to 106 (GEAVVYVNGV…GMHIITVEGI (87 aa)) is the 2Fe-2S ferredoxin-type domain. C58, C63, C66, C88, C128, C131, C164, and C166 together coordinate [2Fe-2S] cluster. One can recognise an FAD-binding PCMH-type domain in the interval 265–450 (NGFNGIRWYR…LSVILPWTRP (186 aa)). Residues 293–300 (LIIGNSEV), F373, 383–387 (SVGGN), D396, L440, and K458 contribute to the FAD site. The Mo-molybdopterin site is built by Q804 and F835. Residues E839 and R917 each coordinate substrate. R949 contributes to the Mo-molybdopterin binding site. Substrate-binding residues include F951 and T1047. A1116 provides a ligand contact to Mo-molybdopterin. The Proton acceptor role is filled by E1305.

This sequence belongs to the xanthine dehydrogenase family. In terms of assembly, homodimer. It depends on [2Fe-2S] cluster as a cofactor. FAD is required as a cofactor. Requires Mo-molybdopterin as cofactor.

It carries out the reaction xanthine + NAD(+) + H2O = urate + NADH + H(+). It catalyses the reaction hypoxanthine + NAD(+) + H2O = xanthine + NADH + H(+). Its function is as follows. Key enzyme involved in purine catabolism. Catalyzes the oxidation of hypoxanthine to xanthine and the oxidation of xanthine to urate. This chain is Xanthine dehydrogenase (XDH), found in Oryza sativa subsp. japonica (Rice).